The following is a 104-amino-acid chain: Phycoerythrin alpha-2 chain, chloroplastic (104 aa).

Residues 1-37 (MSAKIIAFSAVVATASAFAPTAGFVPRLRSGATSVNM) constitute a chloroplast transit peptide. Lys-41 is modified (5-hydroxylysine). Residues Cys-56 and Arg-58 each contribute to the 15,16-dihydrobiliverdin site. A 15,16-dihydrobiliverdin chromophore region spans residues 61–63 (KEY). Residue Lys-78 participates in 15,16-dihydrobiliverdin binding.

The protein belongs to the phycoerythrin family. Heterotetramer of 2 different alpha chains and 2 identical beta chains. The subunit composition could comprise of any combination of 2 out of 4 different alpha units with an invariant beta unit. In terms of processing, contains one covalently linked 15,16-dihydrobiliverdin chromophore.

The protein resides in the plastid. Its subcellular location is the chloroplast thylakoid membrane. Its function is as follows. Light-harvesting photosynthetic tetrapyrrole chromophore-protein from the phycobiliprotein complex. The chain is Phycoerythrin alpha-2 chain, chloroplastic (cpeA2) from Rhodomonas sp. (strain CS 24) (Chroomonas sp. (strain CS24)).